We begin with the raw amino-acid sequence, 186 residues long: ATP synthase subunit b 3 (186 aa).

The helical transmembrane segment at 5–25 threads the bilayer; the sequence is LLPALLTFSATPALAAKGPFF.

This sequence belongs to the ATPase B chain family. As to quaternary structure, F-type ATPases have 2 components, F(1) - the catalytic core - and F(0) - the membrane proton channel. F(1) has five subunits: alpha(3), beta(3), gamma(1), delta(1), epsilon(1). F(0) has three main subunits: a(1), b(2) and c(10-14). The alpha and beta chains form an alternating ring which encloses part of the gamma chain. F(1) is attached to F(0) by a central stalk formed by the gamma and epsilon chains, while a peripheral stalk is formed by the delta and b chains.

It localises to the cell inner membrane. Its function is as follows. F(1)F(0) ATP synthase produces ATP from ADP in the presence of a proton or sodium gradient. F-type ATPases consist of two structural domains, F(1) containing the extramembraneous catalytic core and F(0) containing the membrane proton channel, linked together by a central stalk and a peripheral stalk. During catalysis, ATP synthesis in the catalytic domain of F(1) is coupled via a rotary mechanism of the central stalk subunits to proton translocation. In terms of biological role, component of the F(0) channel, it forms part of the peripheral stalk, linking F(1) to F(0). The sequence is that of ATP synthase subunit b 3 from Dinoroseobacter shibae (strain DSM 16493 / NCIMB 14021 / DFL 12).